The following is a 317-amino-acid chain: Small ribosomal subunit protein RACK1 (317 aa).

WD repeat units follow at residues Gly13–Lys44, Gly61–Asp91, Gly103–Asn133, Gly146–Asn178, Gly190–Asp220, Asp231–Asp260, and Ala281–Gln311.

Belongs to the WD repeat G protein beta family. Ribosomal protein RACK1 subfamily.

Its subcellular location is the cytoplasm. Involved in the recruitment, assembly and/or regulation of a variety of signaling molecules. Interacts with a wide variety of proteins and plays a role in many cellular processes. Required for VANGL2 membrane localization, inhibits Wnt signaling and regulates cellular polarization and oriented cell division during gastrulation. In Oreochromis niloticus (Nile tilapia), this protein is Small ribosomal subunit protein RACK1 (gnb2l1).